A 63-amino-acid chain; its full sequence is Small ribosomal subunit protein eS27 (63 aa).

The Zn(2+) site is built by cysteine 18, cysteine 21, cysteine 37, and cysteine 40. A C4-type zinc finger spans residues 18-40; that stretch reads CLDCGNQQVVFDRAASYVQCIIC.

Belongs to the eukaryotic ribosomal protein eS27 family. Part of the 30S ribosomal subunit. Requires Zn(2+) as cofactor.

The polypeptide is Small ribosomal subunit protein eS27 (Methanothermobacter thermautotrophicus (strain ATCC 29096 / DSM 1053 / JCM 10044 / NBRC 100330 / Delta H) (Methanobacterium thermoautotrophicum)).